Consider the following 105-residue polypeptide: MLLNKITFFERFEHDILSGAKTITLRDEAESHVIVGQILPVSTFETERWFCDIQIIDVTPVKLTELTEVHAKQENMTLPQLRDVIAEIYPGLEQLFMIRFRILSQ.

An ASCH domain is found at 7–93; that stretch reads TFFERFEHDI…VIAEIYPGLE (87 aa). The active-site Proton acceptor is Lys-21. The active-site Nucleophile is the Thr-24. The Proton donor role is filled by Glu-74.

Belongs to the N(4)-acetylcytidine amidohydrolase family.

The catalysed reaction is N(4)-acetylcytidine + H2O = cytidine + acetate + H(+). It carries out the reaction N(4)-acetyl-2'-deoxycytidine + H2O = 2'-deoxycytidine + acetate + H(+). The enzyme catalyses N(4)-acetylcytosine + H2O = cytosine + acetate + H(+). In terms of biological role, catalyzes the hydrolysis of N(4)-acetylcytidine (ac4C). In Shewanella baltica (strain OS195), this protein is N(4)-acetylcytidine amidohydrolase.